A 221-amino-acid chain; its full sequence is Extracellular superoxide dismutase [Cu-Zn] (221 aa).

Positions 1 to 19 (MKTRVVLILALSVCIEAAS) are cleaved as a signal peptide. Asn56 carries an N-linked (GlcNAc...) asparagine glycan. Residues His70, His72, and His87 each contribute to the Cu cation site. Cys81 and Cys170 form a disulfide bridge. Positions 87, 95, 104, and 107 each coordinate Zn(2+). Position 144 (His144) interacts with Cu cation.

Belongs to the Cu-Zn superoxide dismutase family. It depends on Cu cation as a cofactor. Requires Zn(2+) as cofactor. Isoform 2 is preferentially expressed in eggs.

It localises to the secreted. Its subcellular location is the extracellular space. The protein localises to the membrane. It catalyses the reaction 2 superoxide + 2 H(+) = H2O2 + O2. Protects cells against oxidative stress by converting superoxide radicals to hydrogen peroxide. Oxidative stress is involved in various biological dysfunctions and senescence. The sequence is that of Extracellular superoxide dismutase [Cu-Zn] (sod-4) from Caenorhabditis elegans.